We begin with the raw amino-acid sequence, 156 residues long: LIM domain only protein 3 (156 aa).

2 LIM zinc-binding domains span residues 22-84 (KGCA…LFGV) and 86-148 (GNCA…GLMK).

This chain is LIM domain only protein 3, found in Xenopus laevis (African clawed frog).